We begin with the raw amino-acid sequence, 109 residues long: uncharacterized protein (109 aa).

The interval 1–26 (MTPRSLPRYGNSSRRKSFPMHRPSNV) is disordered.

This is an uncharacterized protein from Mycobacterium bovis (strain ATCC BAA-935 / AF2122/97).